Here is a 478-residue protein sequence, read N- to C-terminus: Protein trichome birefringence-like 20 (478 aa).

A helical; Signal-anchor for type II membrane protein membrane pass occupies residues 10–30 (IGLVIFPLILLTIAPILYLFF). Low complexity predominate over residues 50–68 (SSAISSPSRYNHSSSSSDS). The disordered stretch occupies residues 50 to 125 (SSAISSPSRY…KEHRRKKRKR (76 aa)). Residues 92–110 (SSSLHNNDRLSISSSNGHH) show a composition bias toward polar residues. Over residues 112–125 (VTPKKEHRRKKRKR) the composition is skewed to basic residues. The GDS motif motif lies at 200–202 (GDS). The DCXHWCLPGXXDXWN motif motif lies at 447–461 (DCVHWCLPGPIDSWN).

It belongs to the PC-esterase family. TBL subfamily.

It is found in the membrane. May act as a bridging protein that binds pectin and other cell wall polysaccharides. Probably involved in maintaining esterification of pectins. May be involved in the specific O-acetylation of cell wall polymers. The protein is Protein trichome birefringence-like 20 (TBL20) of Arabidopsis thaliana (Mouse-ear cress).